The chain runs to 326 residues: MGKSKKNRAAATNQLKHKSQTSAEAFSFGDPVPVLDRRELLDYVECVQTDRWYEPPVSFDGLARTFRAAVHHSSPIAVKCNILTSTYIPHPLLSQQAFSRFVQDYLVFGNAYLEKRTNRFGEVIALEPALAKYTRRGLDLDTYWFVQYGMTTQPYQFTKGSIFHLLEPDINQEIYGLPGYLSAIPSALLNESATLFRRKYYINGSHAGFIMYMTDAAQNQEDVNNLRNAMKSAKGPGNFRNLFMYSPNGKKDGLQIIPLSEVAAKDEFLNIKNVSRDDMMAAHRVPPQMMGIMPNNVRGVWGCGKSEFSVCEERINTLTEKDAGIK.

The interval 1–24 (MGKSKKNRAAATNQLKHKSQTSAE) is disordered. Residues 10–24 (AATNQLKHKSQTSAE) show a composition bias toward polar residues.

This sequence belongs to the phage portal family. PBSX subfamily.

In Escherichia coli, this protein is Protein ORF5 in retron Ec67.